Reading from the N-terminus, the 234-residue chain is ATP-dependent dethiobiotin synthetase BioD (234 aa).

Residue 12–17 (DVGKTF) coordinates ATP. Threonine 16 is a binding site for Mg(2+). Lysine 37 is a catalytic residue. Serine 41 contributes to the substrate binding site. Residues aspartate 52, 118–121 (EGAG), and 178–179 (SQ) each bind ATP. 2 residues coordinate Mg(2+): aspartate 52 and glutamate 118.

This sequence belongs to the dethiobiotin synthetase family. As to quaternary structure, homodimer. Mg(2+) serves as cofactor.

Its subcellular location is the cytoplasm. It catalyses the reaction (7R,8S)-7,8-diammoniononanoate + CO2 + ATP = (4R,5S)-dethiobiotin + ADP + phosphate + 3 H(+). The protein operates within cofactor biosynthesis; biotin biosynthesis; biotin from 7,8-diaminononanoate: step 1/2. Catalyzes a mechanistically unusual reaction, the ATP-dependent insertion of CO2 between the N7 and N8 nitrogen atoms of 7,8-diaminopelargonic acid (DAPA, also called 7,8-diammoniononanoate) to form a ureido ring. The polypeptide is ATP-dependent dethiobiotin synthetase BioD (Phenylobacterium zucineum (strain HLK1)).